Reading from the N-terminus, the 167-residue chain is Large ribosomal subunit protein bL9 (167 aa).

The protein belongs to the bacterial ribosomal protein bL9 family.

Its function is as follows. Binds to the 23S rRNA. This Nitratidesulfovibrio vulgaris (strain ATCC 29579 / DSM 644 / CCUG 34227 / NCIMB 8303 / VKM B-1760 / Hildenborough) (Desulfovibrio vulgaris) protein is Large ribosomal subunit protein bL9.